Reading from the N-terminus, the 380-residue chain is Cytochrome b (380 aa).

The next 4 membrane-spanning stretches (helical) occupy residues 34-54 (FGSL…LLAT), 78-99 (WLIR…YLHI), 114-134 (WNTG…GYVL), and 179-199 (FFAL…IHLT). Heme b-binding residues include His-84 and His-98. Positions 183 and 197 each coordinate heme b. His-202 contacts a ubiquinone. 4 helical membrane-spanning segments follow: residues 227–247 (LKDI…ALFS), 289–309 (LGGV…PLLH), 321–341 (LSQL…WVGS), and 348–368 (FIII…LLFP).

The protein belongs to the cytochrome b family. As to quaternary structure, the cytochrome bc1 complex contains 11 subunits: 3 respiratory subunits (MT-CYB, CYC1 and UQCRFS1), 2 core proteins (UQCRC1 and UQCRC2) and 6 low-molecular weight proteins (UQCRH/QCR6, UQCRB/QCR7, UQCRQ/QCR8, UQCR10/QCR9, UQCR11/QCR10 and a cleavage product of UQCRFS1). This cytochrome bc1 complex then forms a dimer. It depends on heme b as a cofactor.

The protein resides in the mitochondrion inner membrane. Component of the ubiquinol-cytochrome c reductase complex (complex III or cytochrome b-c1 complex) that is part of the mitochondrial respiratory chain. The b-c1 complex mediates electron transfer from ubiquinol to cytochrome c. Contributes to the generation of a proton gradient across the mitochondrial membrane that is then used for ATP synthesis. This chain is Cytochrome b (MT-CYB), found in Cepphus grylle (Black guillemot).